Consider the following 207-residue polypeptide: Guanylate kinase (207 aa).

The 181-residue stretch at 4–184 (GLLFIVSAPS…AVSDLYKIIR (181 aa)) folds into the Guanylate kinase-like domain. ATP is bound at residue 11-18 (APSGTGKS).

It belongs to the guanylate kinase family.

Its subcellular location is the cytoplasm. It carries out the reaction GMP + ATP = GDP + ADP. Essential for recycling GMP and indirectly, cGMP. This chain is Guanylate kinase, found in Buchnera aphidicola subsp. Baizongia pistaciae (strain Bp).